The primary structure comprises 197 residues: Mediator of RNA polymerase II transcription subunit 21 (197 aa).

The interval Pro37 to Thr112 is disordered. 2 stretches are compositionally biased toward low complexity: residues Pro60–Gly70 and Pro90–Pro100. Residues Gly140–Leu183 are a coiled coil.

It belongs to the Mediator complex subunit 21 family. Component of the Mediator complex.

Its subcellular location is the nucleus. In terms of biological role, component of the Mediator complex, a coactivator involved in the regulated transcription of nearly all RNA polymerase II-dependent genes. Mediator functions as a bridge to convey information from gene-specific regulatory proteins to the basal RNA polymerase II transcription machinery. Mediator is recruited to promoters by direct interactions with regulatory proteins and serves as a scaffold for the assembly of a functional preinitiation complex with RNA polymerase II and the general transcription factors. The sequence is that of Mediator of RNA polymerase II transcription subunit 21 (SRB7) from Coccidioides immitis (strain RS) (Valley fever fungus).